The chain runs to 126 residues: Cell cycle protein GpsB (126 aa).

Positions 35 to 72 (LDLVIKDYQTYQENIDRLTADNTRLFNKVEELNRQLSA) form a coiled coil.

It belongs to the GpsB family. In terms of assembly, forms polymers through the coiled coil domains. Interacts with PBP1, MreC and EzrA.

The protein localises to the cytoplasm. Its function is as follows. Divisome component that associates with the complex late in its assembly, after the Z-ring is formed, and is dependent on DivIC and PBP2B for its recruitment to the divisome. Together with EzrA, is a key component of the system that regulates PBP1 localization during cell cycle progression. Its main role could be the removal of PBP1 from the cell pole after pole maturation is completed. Also contributes to the recruitment of PBP1 to the division complex. Not essential for septum formation. The polypeptide is Cell cycle protein GpsB (Latilactobacillus sakei subsp. sakei (strain 23K) (Lactobacillus sakei subsp. sakei)).